The sequence spans 638 residues: Probable ATP-binding protein YheS (638 aa).

ABC transporter domains are found at residues 2–246 (IIFS…AQQT) and 313–531 (VMIE…STSE). Residues 34-41 (GKNGCGKS) and 349-356 (GKNGAGKS) each bind ATP. The segment at 525-563 (EQNSTSENKVSEKVGDNENSVQNRKEQKRREAELRQQTA) is disordered. The segment covering 547 to 558 (NRKEQKRREAEL) has biased composition (basic and acidic residues).

Belongs to the ABC transporter superfamily. ABCF family. YheS subfamily.

Its function is as follows. Genetic data indicate it may be involved in ribosome assembly or function. This is Probable ATP-binding protein YheS from Haemophilus influenzae (strain ATCC 51907 / DSM 11121 / KW20 / Rd).